The chain runs to 197 residues: MSLSIDVTSLPSISSSIFKNESSSTTSTLSGKSIGRNEQYVSSDIEAFNKYMLSKSPEDIGPSDSASNNPLTSFSIRSNAVKTNADAGVSMDSSTQSRPSSNVGCDQMDFSLTKGINVSASLDSCVSISTNHKKEKSKKDKSRKHYPRIEADSDYEDYVLDDSDSDDGKCKNCKYKKKYFALRMRMKQVAMQLIEDL.

Over residues 17-30 (IFKNESSSTTSTLS) the composition is skewed to low complexity. The tract at residues 17 to 36 (IFKNESSSTTSTLSGKSIGR) is disordered. Position 92 (aspartate 92) interacts with Mg(2+).

This sequence belongs to the rotavirus NSP5 family. In terms of assembly, homodimer. Interacts with VP1. Interacts with VP2. Interacts with NSP2; this interaction leads to up-regulation of NSP5 hyperphosphorylation and formation of virus factories. Interacts with NSP6. Participates in the selective exclusion of host proteins from stress granules (SG) and P bodies (PB). Also participates in the sequestration of these remodeled organelles in viral factories. Requires Mg(2+) as cofactor. O-glycosylated.

The protein resides in the host cytoplasm. Its function is as follows. Plays an essential role in the viral genome replication. Participates, together with NSP2, in the formation of viral factories (viroplasms), which are large inclusions in the host cytoplasm where replication intermediates are assembled and viral RNA replication takes place. Orchestrates the recruitment of viroplasmic proteins such as capsid proteins to these factories. Participates in the selective exclusion of host proteins from stress granules (SG) and P bodies (PB). Also participates in the sequestration of these remodeled organelles in viral factories. This chain is Non-structural protein 5, found in Homo sapiens (Human).